A 167-amino-acid polypeptide reads, in one-letter code: MELWLTGIVLKPRGLKGEVKVKPVTDYPEKFLSRKSYWVGGSPGDAVPLAVKHASLAGGFAWLFLEGVDSREKAEALAGRQLFIEASEAEPRKDDRAWLHELEGMKVLGAGRKEVGVLKEVLSMPAHEVYEIISGGRSVLVPAIEEFVEEISLEGRYIHVPRFDEFL.

Positions aspartate 94–phenylalanine 166 constitute a PRC barrel domain.

Belongs to the RimM family. As to quaternary structure, binds ribosomal protein uS19.

The protein localises to the cytoplasm. An accessory protein needed during the final step in the assembly of 30S ribosomal subunit, possibly for assembly of the head region. Essential for efficient processing of 16S rRNA. May be needed both before and after RbfA during the maturation of 16S rRNA. It has affinity for free ribosomal 30S subunits but not for 70S ribosomes. In Chlorobium luteolum (strain DSM 273 / BCRC 81028 / 2530) (Pelodictyon luteolum), this protein is Ribosome maturation factor RimM.